A 441-amino-acid chain; its full sequence is Chitinase-like protein Idgf3 (441 aa).

The signal sequence occupies residues methionine 1–alanine 23. In terms of domain architecture, GH18 spans proline 25–leucine 441. Cysteine 29 and cysteine 56 are oxidised to a cystine. A glycan (N-linked (GlcNAc...) asparagine) is linked at asparagine 221. Positions lysine 307–lysine 331 are disordered. Cysteines 342 and 425 form a disulfide.

Belongs to the glycosyl hydrolase 18 family. IDGF subfamily. Post-translationally, glycosylated. In terms of tissue distribution, primarily expressed in yolk cells and fat body. In larvae, it is expressed in small and large salivary gland cells, and weakly expressed in imaginal disks. Less expressed than Idgf2 and Idgf4.

It is found in the secreted. Cooperates with insulin-like peptides to stimulate the proliferation, polarization and motility of imaginal disk cells. May act by stabilizing the binding of insulin-like peptides to its receptor through a simultaneous interaction with both molecules to form a multiprotein signaling complex. The protein is Chitinase-like protein Idgf3 (Idgf3) of Drosophila melanogaster (Fruit fly).